The sequence spans 163 residues: Transcriptional repressor NrdR (163 aa).

A disordered region spans residues 1-22 (MRCPKCQSLKSSVIDSRQAEDG). The segment at 3–34 (CPKCQSLKSSVIDSRQAEDGNTIRRRRSCDQC) is a zinc-finger region. Residues 49-139 (LVVVKKDGTR…VYRSFKDVGE (91 aa)) form the ATP-cone domain.

The protein belongs to the NrdR family. Requires Zn(2+) as cofactor.

Negatively regulates transcription of bacterial ribonucleotide reductase nrd genes and operons by binding to NrdR-boxes. This chain is Transcriptional repressor NrdR, found in Streptococcus suis (strain 98HAH33).